The sequence spans 208 residues: HTLV-1 basic zipper factor (208 aa).

The tract at residues 59–93 (RLRWGPVGEEAPPRGETHRDRQRRAEEKRKRKRER) is disordered. Over residues 69-86 (APPRGETHRDRQRRAEEK) the composition is skewed to basic and acidic residues. 3 consecutive short sequence motifs (nuclear localization signal) follow at residues 86–91 (KRKRKR), 115–119 (RRRRA), and 136–140 (RRERK). A compositionally biased stretch (basic and acidic residues) spans 125–143 (DRARRKLEEEERRERKWRQ). The segment at 125–160 (DRARRKLEEEERRERKWRQTEQGAKQRSARKEKMTE) is disordered.

It belongs to the HTLV-1 HBZ protein family. As to quaternary structure, interacts with host ATF4; this interaction inhibits viral RNA transcriptional activation by preventing ATF4 binding to Tax-responsive elements. Interacts with host CREB1; this interaction inhibits host CREB1 transcriptional activity. Interacts with host JUN, JUNB and JUND. Interacts with host EP300.

It is found in the host nucleus. Its function is as follows. Contributes to the regulation of viral RNA transcription by interacting with host proteins involved in transcriptional activation such as ATF4, or CREB1, and by inhibiting their activity. Additionally, HBZ suppresses host NF-kappa-B-driven transcription mediated by host RELA as well as transcription of some classical NF-kappa-B target genes, including IL8, IL2RA, IRF4, VCAM1, and VEGFA. The polypeptide is HTLV-1 basic zipper factor (HBZ) (Human T-cell leukemia virus 1 (isolate Melanesia mel5 subtype C) (HTLV-1)).